The chain runs to 651 residues: MSGELNGNDTSAQAAVSAGSVLEGAAFADEGEQHNESMKTLVLGALGVVYGDIGTSPIYAFREALHAAATNGILARSDILGVVSLIFWALTLVVTVKYVLFVLRADNNGEGGILSLMALVRGALKGRPDLILGVGICGAALFFGDAVITPAISVLSAMEGLEIVAPNLTPFVVPAAVVILVTLFSVQKLGTGRVAIVFGPIMALWFVALGASGLWHIFDDPTVMAALNPYYAVRFLTVSPAVAFVTVGAVFLAMTGAEALYADLGHFGRKPIVRAWLWIVFPCLLLNYFGQAAFILSHGEAAALPFFQMIPSFALWPMVLLATAATVIASQAVITGAYSVARQAVQLNILPRLEIQHTSEKLHGQIYIPRVNLLLGLAVVILVLGFEKSSNLAAAYGIAVTGNMLVTTVLLYIAMTRIWNWRVSRALPIILGFLVIDMLFFSANIIKVHEGGWASIGIATVLVLIMWTWVRGTRHLFQKTRKAEVPLDLIVEQMAKRPPTIVPGTAVFLTGDPKSAPTALMHSLKHYKVLHENNVILTVVTASKPWVASADRARVSQYNERFMLVTLTFGYMQQPNIPRALGLCRRLGWKFDIMTTSFFLSRRSLKASVHSGMPLWQDKLFILLARTASDATEYFQIPTGRVVEIGTQVNI.

The next 12 helical transmembrane spans lie at 41-61 (LVLGALGVVYGDIGTSPIYAF), 82-102 (VVSLIFWALTLVVTVKYVLFV), 130-150 (LILGVGICGAALFFGDAVITP), 163-183 (IVAPNLTPFVVPAAVVILVTL), 194-214 (VAIVFGPIMALWFVALGASGL), 235-255 (FLTVSPAVAFVTVGAVFLAMT), 276-296 (WLWIVFPCLLLNYFGQAAFIL), 309-329 (MIPSFALWPMVLLATAATVIA), 366-386 (IYIPRVNLLLGLAVVILVLGF), 395-415 (AYGIAVTGNMLVTTVLLYIAM), 426-446 (ALPIILGFLVIDMLFFSANII), and 450-470 (EGGWASIGIATVLVLIMWTWV).

The protein belongs to the HAK/KUP transporter (TC 2.A.72) family.

It is found in the cell inner membrane. The catalysed reaction is K(+)(in) + H(+)(in) = K(+)(out) + H(+)(out). Transport of potassium into the cell. Likely operates as a K(+):H(+) symporter. The protein is Probable potassium transport system protein Kup of Brucella abortus (strain S19).